Here is a 229-residue protein sequence, read N- to C-terminus: Flagellar L-ring protein (229 aa).

Residues Met1–Gly23 form the signal peptide. The N-palmitoyl cysteine moiety is linked to residue Cys24. Residue Cys24 is the site of S-diacylglycerol cysteine attachment.

Belongs to the FlgH family. In terms of assembly, the basal body constitutes a major portion of the flagellar organelle and consists of four rings (L,P,S, and M) mounted on a central rod.

Its subcellular location is the cell outer membrane. It localises to the bacterial flagellum basal body. Its function is as follows. Assembles around the rod to form the L-ring and probably protects the motor/basal body from shearing forces during rotation. This is Flagellar L-ring protein from Cupriavidus pinatubonensis (strain JMP 134 / LMG 1197) (Cupriavidus necator (strain JMP 134)).